Consider the following 252-residue polypeptide: Probable transcriptional regulatory protein Bcav_1989 (252 aa).

This sequence belongs to the TACO1 family.

It is found in the cytoplasm. In Beutenbergia cavernae (strain ATCC BAA-8 / DSM 12333 / CCUG 43141 / JCM 11478 / NBRC 16432 / NCIMB 13614 / HKI 0122), this protein is Probable transcriptional regulatory protein Bcav_1989.